The chain runs to 272 residues: 1,4-dihydroxy-2-naphthoyl-CoA synthase (272 aa).

Residues Arg-33, 72–76 (SGGDQ), Tyr-84, 116–120 (YAIGG), Thr-142, Ser-148, Tyr-245, and Lys-260 each bind substrate. 141–143 (QTG) serves as a coordination point for hydrogencarbonate.

It belongs to the enoyl-CoA hydratase/isomerase family. MenB subfamily. The cofactor is hydrogencarbonate.

It carries out the reaction 2-succinylbenzoyl-CoA + H(+) = 1,4-dihydroxy-2-naphthoyl-CoA + H2O. The protein operates within quinol/quinone metabolism; 1,4-dihydroxy-2-naphthoate biosynthesis; 1,4-dihydroxy-2-naphthoate from chorismate: step 6/7. Its pathway is quinol/quinone metabolism; menaquinone biosynthesis. In terms of biological role, converts o-succinylbenzoyl-CoA (OSB-CoA) to 1,4-dihydroxy-2-naphthoyl-CoA (DHNA-CoA). The protein is 1,4-dihydroxy-2-naphthoyl-CoA synthase of Staphylococcus epidermidis (strain ATCC 35984 / DSM 28319 / BCRC 17069 / CCUG 31568 / BM 3577 / RP62A).